A 163-amino-acid polypeptide reads, in one-letter code: Putative phosphinothricin acetyltransferase YwnH (163 aa).

One can recognise an N-acetyltransferase domain in the interval 1-158 (MTLRLAEHRD…DGKRYDLKIL (158 aa)). Acetyl-CoA-binding positions include 85–87 (IYI), 94–98 (KGVGS), and 124–126 (NKP).

This sequence belongs to the acetyltransferase family. PAT/BAR subfamily.

The catalysed reaction is phosphinothricin + acetyl-CoA = N-acetylphosphinothricin + CoA + H(+). In terms of biological role, this enzyme is an effector of phosphinothricin tripeptide (PTT or bialaphos) resistance. Inactivates PTT by transfer of an acetyl group. This Bacillus subtilis (strain 168) protein is Putative phosphinothricin acetyltransferase YwnH (ywnH).